We begin with the raw amino-acid sequence, 61 residues long: UPF0391 membrane protein Ajs_0703 (61 aa).

2 helical membrane-spanning segments follow: residues 5-25 (AIIF…GVAA) and 33-53 (VLFV…LLGI).

Belongs to the UPF0391 family.

Its subcellular location is the cell membrane. In Acidovorax sp. (strain JS42), this protein is UPF0391 membrane protein Ajs_0703.